The primary structure comprises 367 residues: Heme A synthase (367 aa).

The next 5 membrane-spanning stretches (helical) occupy residues 25–45 (ALRF…LVGG), 111–131 (LIAR…WLTG), 139–159 (WPLV…WWMV), 174–194 (LATH…IMRG), and 210–230 (GFAA…ALVA). Heme is bound at residue His-274. Helical transmembrane passes span 276-296 (IGAY…LRAA), 305-325 (AILL…TLLM), and 327-347 (VPLH…GFAV). Heme is bound at residue His-335.

The protein belongs to the COX15/CtaA family. Type 2 subfamily. As to quaternary structure, interacts with CtaB. Requires heme b as cofactor.

Its subcellular location is the cell membrane. The catalysed reaction is Fe(II)-heme o + 2 A + H2O = Fe(II)-heme a + 2 AH2. Its pathway is porphyrin-containing compound metabolism; heme A biosynthesis; heme A from heme O: step 1/1. Catalyzes the conversion of heme O to heme A by two successive hydroxylations of the methyl group at C8. The first hydroxylation forms heme I, the second hydroxylation results in an unstable dihydroxymethyl group, which spontaneously dehydrates, resulting in the formyl group of heme A. The chain is Heme A synthase from Rhizobium johnstonii (strain DSM 114642 / LMG 32736 / 3841) (Rhizobium leguminosarum bv. viciae).